Here is a 127-residue protein sequence, read N- to C-terminus: Aspartate 1-decarboxylase (127 aa).

Residue serine 25 is the Schiff-base intermediate with substrate; via pyruvic acid of the active site. Residue serine 25 is modified to Pyruvic acid (Ser). Threonine 57 contacts substrate. Tyrosine 58 serves as the catalytic Proton donor. A substrate-binding site is contributed by 73–75; the sequence is GAA.

It belongs to the PanD family. As to quaternary structure, heterooctamer of four alpha and four beta subunits. Pyruvate is required as a cofactor. Post-translationally, is synthesized initially as an inactive proenzyme, which is activated by self-cleavage at a specific serine bond to produce a beta-subunit with a hydroxyl group at its C-terminus and an alpha-subunit with a pyruvoyl group at its N-terminus.

It localises to the cytoplasm. It catalyses the reaction L-aspartate + H(+) = beta-alanine + CO2. The protein operates within cofactor biosynthesis; (R)-pantothenate biosynthesis; beta-alanine from L-aspartate: step 1/1. Catalyzes the pyruvoyl-dependent decarboxylation of aspartate to produce beta-alanine. This Neisseria meningitidis serogroup B (strain ATCC BAA-335 / MC58) protein is Aspartate 1-decarboxylase.